Consider the following 143-residue polypeptide: S-adenosylmethionine decarboxylase proenzyme (143 aa).

The Schiff-base intermediate with substrate; via pyruvic acid role is filled by Ser-66. At Ser-66 the chain carries Pyruvic acid (Ser); by autocatalysis. The Proton acceptor; for processing activity role is filled by His-71. The Proton donor; for catalytic activity role is filled by Cys-86.

It belongs to the prokaryotic AdoMetDC family. Type 1 subfamily. In terms of assembly, heterotetramer of two alpha and two beta chains arranged as a dimer of alpha/beta heterodimers. The cofactor is pyruvate. Post-translationally, is synthesized initially as an inactive proenzyme. Formation of the active enzyme involves a self-maturation process in which the active site pyruvoyl group is generated from an internal serine residue via an autocatalytic post-translational modification. Two non-identical subunits are generated from the proenzyme in this reaction, and the pyruvate is formed at the N-terminus of the alpha chain, which is derived from the carboxyl end of the proenzyme. The post-translation cleavage follows an unusual pathway, termed non-hydrolytic serinolysis, in which the side chain hydroxyl group of the serine supplies its oxygen atom to form the C-terminus of the beta chain, while the remainder of the serine residue undergoes an oxidative deamination to produce ammonia and the pyruvoyl group blocking the N-terminus of the alpha chain.

It carries out the reaction S-adenosyl-L-methionine + H(+) = S-adenosyl 3-(methylsulfanyl)propylamine + CO2. The protein operates within amine and polyamine biosynthesis; S-adenosylmethioninamine biosynthesis; S-adenosylmethioninamine from S-adenosyl-L-methionine: step 1/1. Its function is as follows. Catalyzes the decarboxylation of S-adenosylmethionine to S-adenosylmethioninamine (dcAdoMet), the propylamine donor required for the synthesis of the polyamines spermine and spermidine from the diamine putrescine. This Thermococcus gammatolerans (strain DSM 15229 / JCM 11827 / EJ3) protein is S-adenosylmethionine decarboxylase proenzyme.